The following is a 146-amino-acid chain: Large ribosomal subunit protein uL15 (146 aa).

The tract at residues 1 to 56 (MRLHDLRPVPGSRQKPTRKGQGIGSGLGKTAGRGQKGQKARSGGGVRPGFEGGQMP) is disordered. 2 stretches are compositionally biased toward gly residues: residues 21-35 (QGIGSGLGKTAGRGQ) and 42-52 (SGGGVRPGFEG).

It belongs to the universal ribosomal protein uL15 family. In terms of assembly, part of the 50S ribosomal subunit.

In terms of biological role, binds to the 23S rRNA. The polypeptide is Large ribosomal subunit protein uL15 (Carboxydothermus hydrogenoformans (strain ATCC BAA-161 / DSM 6008 / Z-2901)).